We begin with the raw amino-acid sequence, 737 residues long: Oligopeptide transporter 3 (737 aa).

A run of 16 helical transmembrane segments spans residues 45 to 65 (AWFL…FFTY), 69 to 89 (PLTI…KFMA), 117 to 137 (VIIT…AYSI), 153 to 173 (FICG…WAGI), 215 to 235 (FLVA…LFPI), 255 to 275 (VGSG…AGIS), 289 to 309 (ILNV…VCYW), 357 to 377 (LYLS…FTAT), 418 to 438 (WWFY…SFVW), 446 to 466 (WWGM…IGVI), 478 to 498 (IIGQ…NLIF), 532 to 552 (AQLV…WWML), 604 to 624 (VWLF…SKIF), 629 to 649 (WIPL…PPAT), 650 to 670 (PTNI…VFNY), and 681 to 701 (VLSA…FFAL).

It belongs to the oligopeptide OPT transporter (TC 2.A.67.1) family. In terms of tissue distribution, strong expression in flowers, leaves and roots. Preferentially expressed in the vascular tissues of seedlings and mature plants as well as in pollen and developing embryos.

It is found in the membrane. Functionally, may be involved in the translocation of tetra- and pentapeptides across the cellular membrane in an energy-dependent manner. Also acts as a metal transporter that could be a component of the copper transport machinery. Essential for early embryo development. The sequence is that of Oligopeptide transporter 3 (OPT3) from Arabidopsis thaliana (Mouse-ear cress).